Here is a 253-residue protein sequence, read N- to C-terminus: Ribosomal RNA small subunit methyltransferase I (253 aa).

The span at 230–246 (RKEQRSQRSFSKGDKKP) shows a compositional bias: basic and acidic residues. A disordered region spans residues 230 to 253 (RKEQRSQRSFSKGDKKPSFKRFKK).

It belongs to the methyltransferase superfamily. RsmI family.

The protein localises to the cytoplasm. It carries out the reaction cytidine(1402) in 16S rRNA + S-adenosyl-L-methionine = 2'-O-methylcytidine(1402) in 16S rRNA + S-adenosyl-L-homocysteine + H(+). Functionally, catalyzes the 2'-O-methylation of the ribose of cytidine 1402 (C1402) in 16S rRNA. The polypeptide is Ribosomal RNA small subunit methyltransferase I (Leptospira borgpetersenii serovar Hardjo-bovis (strain L550)).